Here is a 154-residue protein sequence, read N- to C-terminus: Cytochrome c' (154 aa).

An N-terminal signal peptide occupies residues M1–A23. Heme c contacts are provided by R35, Q36, R95, C144, C147, and H148.

In terms of assembly, homodimer. Binds 1 heme c group covalently per subunit.

Its function is as follows. Cytochrome c' is the most widely occurring bacterial c-type cytochrome. Cytochromes c' are high-spin proteins and the heme has no sixth ligand. Their exact function is not known. This Allochromatium vinosum (strain ATCC 17899 / DSM 180 / NBRC 103801 / NCIMB 10441 / D) (Chromatium vinosum) protein is Cytochrome c' (cycA).